The chain runs to 457 residues: MPRPASHLAPMPSDHPDFRSKSARLRCQPPRTNNCGTFKQPPSVAATSRPKPGNPFLQPPTKGTPPPKKKKKNHTEGCHTHEANPEPNTKHTETEPPIISHCPPPHPGPTATPNLLPCPNPTSSFCQNTRDSPSLPPNVQTWSIFPKHPSKDVTAQVKSQSVSHRAPITYQPPRPTTTSNPRISQSYHMKSISSYLSFAHMNITHTTEQHAENQPHWKTILDIAPFVSITFPAIMCLIFDEDSFEESPFLRFITLLLPFSYSAVQYALLYTNWKSHNKPEPILHTTLYYTLSLLLLAFTIISILSIIPFSLNEWDHAASFFYPIVLPSFTVPPAYLLSSSYFLVPRQIRLTDTVISILISVCSIVNVLLVFKEFNYYPYSAIISSISVLLQLLSEKHCLFKQSPPSTASSRAAVLILTLILAVLVYTFLGYGAIYILDDHFHLLGKMKSILPSEPHQ.

Disordered regions lie at residues 1-112 (MPRP…PTAT) and 157-183 (VKSQ…NPRI). Over residues 74-94 (HTEGCHTHEANPEPNTKHTET) the composition is skewed to basic and acidic residues. Over residues 102-112 (CPPPHPGPTAT) the composition is skewed to pro residues.

Belongs to the UPF0328 family.

The protein is UPF0328 protein ECU05_0030 of Encephalitozoon cuniculi (strain GB-M1) (Microsporidian parasite).